A 350-amino-acid polypeptide reads, in one-letter code: Phosphoribosylformylglycinamidine cyclo-ligase (350 aa).

Belongs to the AIR synthase family.

The protein resides in the cytoplasm. It carries out the reaction 2-formamido-N(1)-(5-O-phospho-beta-D-ribosyl)acetamidine + ATP = 5-amino-1-(5-phospho-beta-D-ribosyl)imidazole + ADP + phosphate + H(+). It functions in the pathway purine metabolism; IMP biosynthesis via de novo pathway; 5-amino-1-(5-phospho-D-ribosyl)imidazole from N(2)-formyl-N(1)-(5-phospho-D-ribosyl)glycinamide: step 2/2. This is Phosphoribosylformylglycinamidine cyclo-ligase from Cupriavidus taiwanensis (strain DSM 17343 / BCRC 17206 / CCUG 44338 / CIP 107171 / LMG 19424 / R1) (Ralstonia taiwanensis (strain LMG 19424)).